Consider the following 556-residue polypeptide: Peptidylarginine deiminase (556 aa).

The N-terminal stretch at 1 to 23 (MKKLLQAKALILALGLFQLPAIA) is a signal peptide. Residues 24–43 (QTQMQADRTNGQFATEEMQR) constitute a propeptide that is removed on maturation. The Amidino-cysteine intermediate role is filled by cysteine 351.

It belongs to the agmatine deiminase family. It depends on FAD as a cofactor. Requires FMN as cofactor.

It is found in the secreted. Inhibited by cysteine and TLCK. Inhibited by high concentration of thiourea and thio-L-citrulline. In terms of biological role, deiminates the guanidino group of C-terminal arginine residues on a variety of peptides, including the vasoregulatory peptide-hormone bradykinin, to yield ammonia and a citrulline residue. May promote the growth of the pathogen in the periodontal pocket by producing ammonia, ammonia having a protective effect during acidic cleaning cycles in the mouth. This is Peptidylarginine deiminase from Porphyromonas gingivalis (strain ATCC BAA-308 / W83).